The primary structure comprises 696 residues: Probable E3 ubiquitin ligase complex SCF subunit sconB (696 aa).

Positions 1 to 12 (MDAHELSFRDGH) are enriched in basic and acidic residues. The segment at 1–72 (MDAHELSFRD…HSFNTQKPIR (72 aa)) is disordered. Positions 55-69 (PGSTQDKPHSFNTQK) are enriched in polar residues. The 47-residue stretch at 193–239 (IDFLTALPPEISFKILCYLDTTSLCKAAQVSRRWRALADDDVVWHRM) folds into the F-box domain. The tract at residues 290 to 314 (SATIETAAAGSKRKPESGKEDTAMV) is disordered. The segment covering 302 to 313 (RKPESGKEDTAM) has biased composition (basic and acidic residues). WD repeat units lie at residues 365–402 (GHSNGIMCLQFEDNILATGSYDATIKIWDTETGEELRT), 405–444 (GHQSGIRCLQFDDTKLISGSMDHTLKVWNWRTGECISTYS), 446–482 (HRGGVVGLHFDATILASGSVDKTVKIWNFEDKSTCLL), 484–525 (GHTD…RTFH), 579–622 (DTPS…CLRT), 623–662 (FFGHLEGVWALAADTLRIVSGAEDRMVKIWDPRTGKCERT), and 665–696 (GHSGPVTCIGLGDSRFATGSEDCEVRMYSFQT). Residues 554–596 (NVSVTSGDSPAASPQALPGFDGQTSDTPSSAFGPAFDDGRPSP) form a disordered region.

The protein belongs to the WD repeat MET30/SCONB/SCON-2 family. As to quaternary structure, component of the SCF(sconB) E3 ubiquitin ligase complex.

It participates in protein modification; protein ubiquitination. Functionally, component of the SCF(sconB) E3 ubiquitin ligase complex involved in the regulation of sulfur metabolite repression, probably by mediating the inactivation or degradation of the metR transcription factor. The polypeptide is Probable E3 ubiquitin ligase complex SCF subunit sconB (sconB) (Aspergillus fumigatus (strain ATCC MYA-4609 / CBS 101355 / FGSC A1100 / Af293) (Neosartorya fumigata)).